Consider the following 481-residue polypeptide: Bestrophin homolog 17 (481 aa).

Residues 1 to 27 (MTVSYQLDVSSGNPLLFLRLLGRWRGS) lie on the Cytoplasmic side of the membrane. A helical transmembrane segment spans residues 28 to 48 (IWKSVVGDLFVWLLFYYAIYF). Over 49-95 (AYRYAFSKQLQTVFEEISIHTDDRMKYLPLTFMLGFFVTTVFERWRS) the chain is Extracellular. Residues 96 to 116 (ALNVMPFIESVALSVAVLLPG) traverse the membrane as a helical segment. The Cytoplasmic segment spans residues 117–230 (KGREDRLTRR…AMETLIKFDA (114 aa)). A helical membrane pass occupies residues 231–251 (IPIPIAYPQVVFLAVRVYFAI). At 252-274 (CLVSRQFLISDMKSKTQMDWPVP) the chain is on the extracellular side. Residues 275-295 (IMTVLEFIFVIGWMKVAEVLL) form a helical membrane-spanning segment. Over 296 to 481 (NPLGEDDDDF…SSEESVDKKG (186 aa)) the chain is Cytoplasmic. The disordered stretch occupies residues 427-481 (AGMLNKSTQPDRPTMETVSEEHEPSHFYRGDRVHSSDSGLSKTQQSSEESVDKKG). Residues 445-461 (SEEHEPSHFYRGDRVHS) are compositionally biased toward basic and acidic residues. Residues 462–474 (SDSGLSKTQQSSE) are compositionally biased toward polar residues.

Belongs to the anion channel-forming bestrophin (TC 1.A.46) family. Calcium-sensitive chloride channel subfamily. In terms of assembly, forms oligomers.

The protein localises to the cell membrane. Its function is as follows. Forms chloride channels. This chain is Bestrophin homolog 17, found in Caenorhabditis elegans.